The sequence spans 301 residues: Ribonuclease HIII (301 aa).

The RNase H type-2 domain maps to 84 to 301 (ASAIGSDEVG…TEKAARIAKK (218 aa)). Positions 90, 91, and 195 each coordinate a divalent metal cation.

It belongs to the RNase HII family. RnhC subfamily. Mn(2+) serves as cofactor. The cofactor is Mg(2+).

It is found in the cytoplasm. It catalyses the reaction Endonucleolytic cleavage to 5'-phosphomonoester.. Its function is as follows. Endonuclease that specifically degrades the RNA of RNA-DNA hybrids. The protein is Ribonuclease HIII of Geobacillus sp. (strain WCH70).